Reading from the N-terminus, the 160-residue chain is Cyclic pyranopterin monophosphate synthase (160 aa).

Residues 75 to 77 and 113 to 114 contribute to the substrate site; these read LCH and ME. The active site involves Asp-128.

The protein belongs to the MoaC family. In terms of assembly, homohexamer; trimer of dimers.

It catalyses the reaction (8S)-3',8-cyclo-7,8-dihydroguanosine 5'-triphosphate = cyclic pyranopterin phosphate + diphosphate. The protein operates within cofactor biosynthesis; molybdopterin biosynthesis. Its function is as follows. Catalyzes the conversion of (8S)-3',8-cyclo-7,8-dihydroguanosine 5'-triphosphate to cyclic pyranopterin monophosphate (cPMP). The protein is Cyclic pyranopterin monophosphate synthase of Sodalis glossinidius (strain morsitans).